A 208-amino-acid polypeptide reads, in one-letter code: FMN-dependent NADH:quinone oxidoreductase 3 (208 aa).

This sequence belongs to the azoreductase type 1 family. As to quaternary structure, homodimer. FMN serves as cofactor.

It catalyses the reaction 2 a quinone + NADH + H(+) = 2 a 1,4-benzosemiquinone + NAD(+). The enzyme catalyses N,N-dimethyl-1,4-phenylenediamine + anthranilate + 2 NAD(+) = 2-(4-dimethylaminophenyl)diazenylbenzoate + 2 NADH + 2 H(+). Functionally, quinone reductase that provides resistance to thiol-specific stress caused by electrophilic quinones. Also exhibits azoreductase activity. Catalyzes the reductive cleavage of the azo bond in aromatic azo compounds to the corresponding amines. The chain is FMN-dependent NADH:quinone oxidoreductase 3 from Bacillus cereus (strain ATCC 14579 / DSM 31 / CCUG 7414 / JCM 2152 / NBRC 15305 / NCIMB 9373 / NCTC 2599 / NRRL B-3711).